We begin with the raw amino-acid sequence, 156 residues long: Crossover junction endodeoxyribonuclease RuvC (156 aa).

Catalysis depends on residues Asp7, Glu67, and Asp139. Residues Asp7, Glu67, and Asp139 each contribute to the Mg(2+) site.

This sequence belongs to the RuvC family. As to quaternary structure, homodimer which binds Holliday junction (HJ) DNA. The HJ becomes 2-fold symmetrical on binding to RuvC with unstacked arms; it has a different conformation from HJ DNA in complex with RuvA. In the full resolvosome a probable DNA-RuvA(4)-RuvB(12)-RuvC(2) complex forms which resolves the HJ. The cofactor is Mg(2+).

It is found in the cytoplasm. The enzyme catalyses Endonucleolytic cleavage at a junction such as a reciprocal single-stranded crossover between two homologous DNA duplexes (Holliday junction).. Its function is as follows. The RuvA-RuvB-RuvC complex processes Holliday junction (HJ) DNA during genetic recombination and DNA repair. Endonuclease that resolves HJ intermediates. Cleaves cruciform DNA by making single-stranded nicks across the HJ at symmetrical positions within the homologous arms, yielding a 5'-phosphate and a 3'-hydroxyl group; requires a central core of homology in the junction. The consensus cleavage sequence is 5'-(A/T)TT(C/G)-3'. Cleavage occurs on the 3'-side of the TT dinucleotide at the point of strand exchange. HJ branch migration catalyzed by RuvA-RuvB allows RuvC to scan DNA until it finds its consensus sequence, where it cleaves and resolves the cruciform DNA. In Sphingopyxis alaskensis (strain DSM 13593 / LMG 18877 / RB2256) (Sphingomonas alaskensis), this protein is Crossover junction endodeoxyribonuclease RuvC.